We begin with the raw amino-acid sequence, 245 residues long: Adapter protein MecA (245 aa).

It belongs to the MecA family. In terms of assembly, homodimer.

Its function is as follows. Enables the recognition and targeting of unfolded and aggregated proteins to the ClpC protease or to other proteins involved in proteolysis. The protein is Adapter protein MecA of Streptococcus pneumoniae serotype 19F (strain G54).